A 417-amino-acid polypeptide reads, in one-letter code: Prostaglandin E2 receptor EP3 subtype (417 aa).

Over 1 to 52 the chain is Extracellular; that stretch reads MKATRDHASAPFCTRFNHSDPGIWAAERAVEAPNNLTLPPEPSEDCGSVSVA. N-linked (GlcNAc...) asparagine glycosylation is found at Asn17 and Asn35. Residues 53 to 77 form a helical membrane-spanning segment; that stretch reads FSMTMMITGFVGNALAITLVSKSYR. The Cytoplasmic portion of the chain corresponds to 78–90; sequence RREGKRKKSFLLC. The chain crosses the membrane as a helical span at residues 91–111; the sequence is IGWLALTDMVGQLLTSPVVIV. The Extracellular segment spans residues 112–130; it reads LYLSHQRWEQLDPSGRLCT. A helical membrane pass occupies residues 131-152; that stretch reads FFGLTMTVFGLSSLFIASAMAV. Residues 153-174 are Cytoplasmic-facing; it reads ERALATRAPHWYSSHMKTSVTR. The helical transmembrane segment at 175–196 threads the bilayer; the sequence is AVLLGVWLAVLAFALLPVLGVG. Residues 197–226 are Extracellular-facing; the sequence is QYTIQWPGTWCFISTGPGGNGTNSRQNWGN. A glycan (N-linked (GlcNAc...) asparagine) is linked at Asn216. Residues 227–252 traverse the membrane as a helical segment; the sequence is VFFASAFAILGLSALVVTFACNLATI. Residues 253 to 282 lie on the Cytoplasmic side of the membrane; the sequence is KALVSRCRAKATASQSSAQWGRITTETAIQ. The chain crosses the membrane as a helical span at residues 283-306; it reads LMGIMCVLSVCWSPLLIMMLKMIF. Asn307 is a glycosylation site (N-linked (GlcNAc...) asparagine). At 307–326 the chain is on the extracellular side; that stretch reads NHTSVEHCKTYTENQDECNF. A helical transmembrane segment spans residues 327–348; the sequence is FLIAVRLASLNQILDPWVYLLL. The Cytoplasmic portion of the chain corresponds to 349–417; it reads RKILLQKFCQ…HIYLHTLEHQ (69 aa).

Belongs to the G-protein coupled receptor 1 family. Interacts (via C-terminus) with MKLN1.

The protein localises to the cell membrane. In terms of biological role, receptor for prostaglandin E2 (PGE2). The various isoforms have identical ligand binding properties but interact with different second messenger systems: isoform EP3A couples to G(i)/G(o) proteins; isoform EP3B and isoform EP3C couple to G(s), and isoform EP3D couples to G(i), G(s) and G(p). Required for normal development of fever in response to pyrinogens, including IL1B, prostaglandin E2 and bacterial lipopolysaccharide (LPS). Required for normal potentiation of platelet aggregation by prostaglandin E2, and thus plays a role in the regulation of blood coagulation. Required for increased HCO3(-) secretion in the duodenum in response to mucosal acidification, and thereby contributes to the protection of the mucosa against acid-induced ulceration. Not required for normal kidney function, normal urine volume and osmolality. The chain is Prostaglandin E2 receptor EP3 subtype (PTGER3) from Bos taurus (Bovine).